The sequence spans 278 residues: Phosphatidylglycerol--prolipoprotein diacylglyceryl transferase (278 aa).

Transmembrane regions (helical) follow at residues 19-39 (WYGILMATGVLVATLMAINEG), 49-69 (FIDFLLWAVPIGFIGARIYYV), 83-103 (IIAIWNGGIAIYGGLIAGLIV), and 112-132 (MLPPFLMLDIIAPGVMAAQVI). R134 serves as a coordination point for a 1,2-diacyl-sn-glycero-3-phospho-(1'-sn-glycerol). 3 consecutive transmembrane segments (helical) span residues 174–194 (QPTYLYESALNLVGLILILSL), 204–224 (GEVFFSYVIWYAAVRFFVEGM), and 235–255 (IRVSQALSLILFFGAIILWVY).

The protein belongs to the Lgt family.

Its subcellular location is the cell membrane. The catalysed reaction is L-cysteinyl-[prolipoprotein] + a 1,2-diacyl-sn-glycero-3-phospho-(1'-sn-glycerol) = an S-1,2-diacyl-sn-glyceryl-L-cysteinyl-[prolipoprotein] + sn-glycerol 1-phosphate + H(+). It participates in protein modification; lipoprotein biosynthesis (diacylglyceryl transfer). Functionally, catalyzes the transfer of the diacylglyceryl group from phosphatidylglycerol to the sulfhydryl group of the N-terminal cysteine of a prolipoprotein, the first step in the formation of mature lipoproteins. The sequence is that of Phosphatidylglycerol--prolipoprotein diacylglyceryl transferase from Lactobacillus gasseri (strain ATCC 33323 / DSM 20243 / BCRC 14619 / CIP 102991 / JCM 1131 / KCTC 3163 / NCIMB 11718 / NCTC 13722 / AM63).